The chain runs to 205 residues: Holliday junction branch migration complex subunit RuvA (205 aa).

The domain I stretch occupies residues 1–64 (MIGRIRGLLV…EDAQLLYGFI (64 aa)). The interval 65-143 (SKQERALFRL…SLMEASVGSE (79 aa)) is domain II. A flexible linker region spans residues 144–156 (REFMLQSNYTAPV). The segment at 157-205 (VANTAEEDAIAALLSLGYKPAQASKAVSAVYVDGIDSESLIKSALKSML) is domain III.

Belongs to the RuvA family. Homotetramer. Forms an RuvA(8)-RuvB(12)-Holliday junction (HJ) complex. HJ DNA is sandwiched between 2 RuvA tetramers; dsDNA enters through RuvA and exits via RuvB. An RuvB hexamer assembles on each DNA strand where it exits the tetramer. Each RuvB hexamer is contacted by two RuvA subunits (via domain III) on 2 adjacent RuvB subunits; this complex drives branch migration. In the full resolvosome a probable DNA-RuvA(4)-RuvB(12)-RuvC(2) complex forms which resolves the HJ.

The protein localises to the cytoplasm. Functionally, the RuvA-RuvB-RuvC complex processes Holliday junction (HJ) DNA during genetic recombination and DNA repair, while the RuvA-RuvB complex plays an important role in the rescue of blocked DNA replication forks via replication fork reversal (RFR). RuvA specifically binds to HJ cruciform DNA, conferring on it an open structure. The RuvB hexamer acts as an ATP-dependent pump, pulling dsDNA into and through the RuvAB complex. HJ branch migration allows RuvC to scan DNA until it finds its consensus sequence, where it cleaves and resolves the cruciform DNA. This chain is Holliday junction branch migration complex subunit RuvA, found in Shewanella piezotolerans (strain WP3 / JCM 13877).